The sequence spans 298 residues: Probable endonuclease 4 (298 aa).

Histidine 69, histidine 111, glutamate 146, aspartate 180, histidine 183, histidine 215, aspartate 228, histidine 230, and glutamate 260 together coordinate Zn(2+).

This sequence belongs to the AP endonuclease 2 family. Requires Zn(2+) as cofactor.

The catalysed reaction is Endonucleolytic cleavage to 5'-phosphooligonucleotide end-products.. In terms of biological role, endonuclease IV plays a role in DNA repair. It cleaves phosphodiester bonds at apurinic or apyrimidinic (AP) sites, generating a 3'-hydroxyl group and a 5'-terminal sugar phosphate. In Bacillus cereus (strain 03BB102), this protein is Probable endonuclease 4.